A 181-amino-acid chain; its full sequence is Shikimate kinase (181 aa).

17–22 (GVGKTT) lines the ATP pocket. Threonine 21 lines the Mg(2+) pocket. Positions 39, 63, and 85 each coordinate substrate. Residue arginine 122 participates in ATP binding. Arginine 141 is a substrate binding site.

Belongs to the shikimate kinase family. As to quaternary structure, monomer. Mg(2+) serves as cofactor.

The protein localises to the cytoplasm. It catalyses the reaction shikimate + ATP = 3-phosphoshikimate + ADP + H(+). Its pathway is metabolic intermediate biosynthesis; chorismate biosynthesis; chorismate from D-erythrose 4-phosphate and phosphoenolpyruvate: step 5/7. Functionally, catalyzes the specific phosphorylation of the 3-hydroxyl group of shikimic acid using ATP as a cosubstrate. This Nostoc punctiforme (strain ATCC 29133 / PCC 73102) protein is Shikimate kinase.